We begin with the raw amino-acid sequence, 98 residues long: Large ribosomal subunit protein bL28 (98 aa).

The protein belongs to the bacterial ribosomal protein bL28 family.

This is Large ribosomal subunit protein bL28 from Chelativorans sp. (strain BNC1).